The sequence spans 415 residues: Polyadenylate-binding protein RBP45C (415 aa).

Positions 1–77 (MMQQPPPASN…GGSQNPGSAG (77 aa)) are disordered. Residues 23-64 (QQAYLQQQQSWMMQHQQQQQGQPPAGWNQQSAPSSGQPQQQQ) are compositionally biased toward low complexity. 3 RRM domains span residues 80-160 (RSLW…WAQL), 173-252 (HTVF…PAAN), and 278-350 (TTIF…WGRS). Residues 344 to 356 (RLSWGRSPSNKQT) are compositionally biased toward polar residues. The interval 344-369 (RLSWGRSPSNKQTQPDQAQYGGGGGY) is disordered.

This sequence belongs to the polyadenylate-binding RBP45 family. As to quaternary structure, interacts with the poly(A) tail of mRNA in nucleus. In terms of tissue distribution, mostly expressed in seedlings and stems, and, to a lower extent, in leaves and flowers.

The protein localises to the nucleus. Its function is as follows. Heterogeneous nuclear ribonucleoprotein (hnRNP)-protein binding the poly(A) tail of mRNA and probably involved in some steps of pre-mRNA maturation. The protein is Polyadenylate-binding protein RBP45C (RBP45C) of Arabidopsis thaliana (Mouse-ear cress).